The sequence spans 180 residues: Insulin-like growth factor 2 (180 aa).

An N-terminal signal peptide occupies residues 1–24 (MGIPVGKSMLVLLISLAFALCCIA). Residues 25–52 (AYRPSETLCGGELVDTLQFVCSDRGFYF) form a b region. Intrachain disulfides connect C33–C71, C45–C84, and C70–C75. Residues 53–64 (SRPSSRANRRSR) are c. The a stretch occupies residues 65 to 85 (GIVEECCFRSCDLALLETYCA). The d stretch occupies residues 86–91 (TPAKSE). Positions 92 to 180 (RDVSTSQAVL…ASSEMSSNHQ (89 aa)) are cleaved as a propeptide — e peptide. Positions 160–180 (VLPPKDPAHGGASSEMSSNHQ) are disordered.

It belongs to the insulin family. Interacts with MYORG; this interaction is required for IGF2 secretion. Interacts with integrins ITGAV:ITGB3 and ITGA6:ITGB4; integrin-binding is required for IGF2 signaling. Interacts with IGFBP2. Post-translationally, proteolytically processed by PCSK4, proIGF2 is cleaved at Arg-128 and Arg-92 to generate big-IGF2 and mature IGF2.

It is found in the secreted. Its function is as follows. The insulin-like growth factors possess growth-promoting activity. Major fetal growth hormone in mammals. Plays a key role in regulating fetoplacental development. IGF2 is influenced by placental lactogen. Also involved in tissue differentiation. In adults, involved in glucose metabolism in adipose tissue, skeletal muscle and liver. Acts as a ligand for integrin which is required for IGF2 signaling. Positively regulates myogenic transcription factor MYOD1 function by facilitating the recruitment of transcriptional coactivators, thereby controlling muscle terminal differentiation. Inhibits myoblast differentiation and modulates metabolism via increasing the mitochondrial respiration rate. Functionally, preptin undergoes glucose-mediated co-secretion with insulin, and acts as a physiological amplifier of glucose-mediated insulin secretion. Exhibits osteogenic properties by increasing osteoblast mitogenic activity through phosphoactivation of MAPK1 and MAPK3. This is Insulin-like growth factor 2 from Rattus norvegicus (Rat).